We begin with the raw amino-acid sequence, 603 residues long: NADH-ubiquinone oxidoreductase chain 5 (603 aa).

16 consecutive transmembrane segments (helical) span residues 4–24 (YTTM…TTLI), 38–58 (SIIA…MCLD), 87–107 (MTFI…SLWY), 122–142 (LIFL…QLFI), 144–160 (WEGV…WWYA), 171–191 (AILY…WFLL), 211–233 (TPLL…HPWL), 241–261 (TPVS…FLLI), 272–292 (LIQT…AICA), 301–320 (IVAF…IGIN), 325–347 (AFLH…GSII), 370–390 (STSL…TGFY), 407–429 (WALS…MILL), 457–477 (LTIG…PMST), 482–502 (IPLY…LTAL), and 583–603 (MIKL…LLIM).

This sequence belongs to the complex I subunit 5 family. In terms of assembly, core subunit of respiratory chain NADH dehydrogenase (Complex I) which is composed of 45 different subunits.

The protein resides in the mitochondrion inner membrane. The enzyme catalyses a ubiquinone + NADH + 5 H(+)(in) = a ubiquinol + NAD(+) + 4 H(+)(out). Core subunit of the mitochondrial membrane respiratory chain NADH dehydrogenase (Complex I) which catalyzes electron transfer from NADH through the respiratory chain, using ubiquinone as an electron acceptor. Essential for the catalytic activity and assembly of complex I. This chain is NADH-ubiquinone oxidoreductase chain 5 (MT-ND5), found in Pan paniscus (Pygmy chimpanzee).